The sequence spans 98 residues: Large ribosomal subunit protein uL23 (98 aa).

It belongs to the universal ribosomal protein uL23 family. As to quaternary structure, part of the 50S ribosomal subunit. Contacts protein L29, and trigger factor when it is bound to the ribosome.

One of the early assembly proteins it binds 23S rRNA. One of the proteins that surrounds the polypeptide exit tunnel on the outside of the ribosome. Forms the main docking site for trigger factor binding to the ribosome. In Lactobacillus gasseri (strain ATCC 33323 / DSM 20243 / BCRC 14619 / CIP 102991 / JCM 1131 / KCTC 3163 / NCIMB 11718 / NCTC 13722 / AM63), this protein is Large ribosomal subunit protein uL23.